The following is a 210-amino-acid chain: Thymidylate kinase (210 aa).

An ATP-binding site is contributed by 10 to 17; it reads GPEGAGKS.

The protein belongs to the thymidylate kinase family.

It catalyses the reaction dTMP + ATP = dTDP + ADP. Its function is as follows. Phosphorylation of dTMP to form dTDP in both de novo and salvage pathways of dTTP synthesis. The chain is Thymidylate kinase from Ectopseudomonas mendocina (strain ymp) (Pseudomonas mendocina).